The following is a 259-amino-acid chain: Deoxyribose-phosphate aldolase (259 aa).

Catalysis depends on Asp102, which acts as the Proton donor/acceptor. The active-site Schiff-base intermediate with acetaldehyde is Lys167. The Proton donor/acceptor role is filled by Lys201.

Belongs to the DeoC/FbaB aldolase family. DeoC type 2 subfamily.

It localises to the cytoplasm. It catalyses the reaction 2-deoxy-D-ribose 5-phosphate = D-glyceraldehyde 3-phosphate + acetaldehyde. Its pathway is carbohydrate degradation; 2-deoxy-D-ribose 1-phosphate degradation; D-glyceraldehyde 3-phosphate and acetaldehyde from 2-deoxy-alpha-D-ribose 1-phosphate: step 2/2. Functionally, catalyzes a reversible aldol reaction between acetaldehyde and D-glyceraldehyde 3-phosphate to generate 2-deoxy-D-ribose 5-phosphate. The chain is Deoxyribose-phosphate aldolase from Serratia proteamaculans (strain 568).